Consider the following 558-residue polypeptide: Urocanate hydratase (558 aa).

NAD(+) contacts are provided by residues 54–55 (GG), glutamine 132, 178–180 (GMG), glutamate 198, 244–245 (NA), 265–269 (QTSAH), 275–276 (YL), and tyrosine 324. The active site involves cysteine 412. Glycine 494 lines the NAD(+) pocket.

It belongs to the urocanase family. NAD(+) is required as a cofactor.

Its subcellular location is the cytoplasm. It carries out the reaction 4-imidazolone-5-propanoate = trans-urocanate + H2O. The protein operates within amino-acid degradation; L-histidine degradation into L-glutamate; N-formimidoyl-L-glutamate from L-histidine: step 2/3. Functionally, catalyzes the conversion of urocanate to 4-imidazolone-5-propionate. The protein is Urocanate hydratase of Acinetobacter baumannii (strain ACICU).